The following is a 432-amino-acid chain: Amino-acid acetyltransferase (432 aa).

The N-acetyltransferase domain occupies 286 to 425 (ELVREAAIED…ASLYNYQRNS (140 aa)).

The protein belongs to the acetyltransferase family. ArgA subfamily.

The protein resides in the cytoplasm. The catalysed reaction is L-glutamate + acetyl-CoA = N-acetyl-L-glutamate + CoA + H(+). Its pathway is amino-acid biosynthesis; L-arginine biosynthesis; N(2)-acetyl-L-ornithine from L-glutamate: step 1/4. This is Amino-acid acetyltransferase from Pseudomonas fluorescens (strain Pf0-1).